The following is a 318-amino-acid chain: Isoflavone reductase (318 aa).

NADP(+) contacts are provided by residues 11–17, Arg-36, and Lys-44; that span reads GPTGAIG. Lys-144 serves as the catalytic Proton acceptor. Arg-148 contributes to the NADP(+) binding site.

The protein belongs to the NmrA-type oxidoreductase family. Isoflavone reductase subfamily.

The enzyme catalyses (3R)-vestitone + NADP(+) = 2'-hydroxyformononetin + NADPH + 2 H(+). It functions in the pathway phytoalexin biosynthesis; pterocarpan phytoalexin biosynthesis. Functionally, reduces achiral isoflavones to chiral isoflavanones during the biosynthesis of chiral pterocarpan phytoalexins. The reduction product is a third isomer, which represents the penultimate intermediate in the synthesis of the phytoalexin (-)-medicarpin, the major phytoalexin in Alfalfa. In Medicago sativa (Alfalfa), this protein is Isoflavone reductase.